Here is a 319-residue protein sequence, read N- to C-terminus: Acetyl esterase (319 aa).

Residues 91 to 93 carry the Involved in the stabilization of the negatively charged intermediate by the formation of the oxyanion hole motif; sequence HGG. Residues Ser-165, Asp-262, and His-292 contribute to the active site.

The protein belongs to the 'GDXG' lipolytic enzyme family. In terms of assembly, homodimer. Interacts with MalT and MelA.

Its subcellular location is the cytoplasm. Displays esterase activity towards short chain fatty esters (acyl chain length of up to 8 carbons). Able to hydrolyze triacetylglycerol (triacetin) and tributyrylglycerol (tributyrin), but not trioleylglycerol (triolein) or cholesterol oleate. Negatively regulates MalT activity by antagonizing maltotriose binding. Inhibits MelA galactosidase activity. In Escherichia coli O8 (strain IAI1), this protein is Acetyl esterase.